Reading from the N-terminus, the 247-residue chain is Probable cyclic nucleotide phosphodiesterase XBJ1_0953 (247 aa).

Positions 8, 10, 52, 82, 154, 192, and 194 each coordinate Fe cation. Residues histidine 10, aspartate 52, and 82-83 each bind AMP; that span reads NH. Histidine 194 serves as a coordination point for AMP.

The protein belongs to the cyclic nucleotide phosphodiesterase class-III family. Requires Fe(2+) as cofactor.

This is Probable cyclic nucleotide phosphodiesterase XBJ1_0953 from Xenorhabdus bovienii (strain SS-2004) (Xenorhabdus nematophila subsp. bovienii).